A 47-amino-acid chain; its full sequence is Large ribosomal subunit protein bL33A (47 aa).

It belongs to the bacterial ribosomal protein bL33 family.

The protein is Large ribosomal subunit protein bL33A of Staphylococcus aureus (strain JH1).